Consider the following 102-residue polypeptide: MFALIISSKGKTSGFFFNSSFSSSALVGIAPLTAYSALVTPVFKSFLVILPAGLKSKSFAVNTPFKSCWCVIVMCSYFFCVYHLQKQHYCGAPSLYSYLLCL.

Helical transmembrane passes span 21–43 and 58–80; these read FSSSALVGIAPLTAYSALVTPVF and SFAVNTPFKSCWCVIVMCSYFFC.

The protein resides in the membrane. This is an uncharacterized protein from Saccharomyces cerevisiae (strain ATCC 204508 / S288c) (Baker's yeast).